A 306-amino-acid chain; its full sequence is Homoserine kinase (306 aa).

Position 84-94 (84-94 (PAGLGLGSSGA)) interacts with ATP.

It belongs to the GHMP kinase family. Homoserine kinase subfamily.

The protein localises to the cytoplasm. The catalysed reaction is L-homoserine + ATP = O-phospho-L-homoserine + ADP + H(+). The protein operates within amino-acid biosynthesis; L-threonine biosynthesis; L-threonine from L-aspartate: step 4/5. In terms of biological role, catalyzes the ATP-dependent phosphorylation of L-homoserine to L-homoserine phosphate. This is Homoserine kinase from Sulfurisphaera tokodaii (strain DSM 16993 / JCM 10545 / NBRC 100140 / 7) (Sulfolobus tokodaii).